A 241-amino-acid chain; its full sequence is MAFGPAAMGYDRAITIFSPDGSLYQVDYAFEAVKKGWTAIGIKSKSSVVIASEKRKAQSLLDVDSIEKVFLIDDHVGCSFAGLASDGRVLIDYARNIALQHRLIYDEPVSIDYLTKSVADVKQMYTQHGGVRPFGVALVIAGIDKSVPKLFMTEPSGQYMPYQAVAIGQGYYTATEFLEKNYKEDLNVEETILLALKALSATLKPNEKLTPNTVEIGYASTQTGLFLKMTNEDKNMYLQKL.

Belongs to the peptidase T1A family. As to quaternary structure, the 20S proteasome core is composed of 14 alpha and 14 beta subunits that assemble into four stacked heptameric rings, resulting in a barrel-shaped structure. The two inner rings, each composed of seven catalytic beta subunits, are sandwiched by two outer rings, each composed of seven alpha subunits. The catalytic chamber with the active sites is on the inside of the barrel. Has a gated structure, the ends of the cylinder being occluded by the N-termini of the alpha-subunits. Is capped at one or both ends by the proteasome regulatory ATPase, PAN.

It is found in the cytoplasm. With respect to regulation, the formation of the proteasomal ATPase PAN-20S proteasome complex, via the docking of the C-termini of PAN into the intersubunit pockets in the alpha-rings, triggers opening of the gate for substrate entry. Interconversion between the open-gate and close-gate conformations leads to a dynamic regulation of the 20S proteasome proteolysis activity. In terms of biological role, component of the proteasome core, a large protease complex with broad specificity involved in protein degradation. The chain is Proteasome subunit alpha from Saccharolobus solfataricus (strain ATCC 35092 / DSM 1617 / JCM 11322 / P2) (Sulfolobus solfataricus).